The primary structure comprises 104 residues: Flagellar hook-basal body complex protein FliE (104 aa).

Belongs to the FliE family.

The protein localises to the bacterial flagellum basal body. This is Flagellar hook-basal body complex protein FliE from Enterobacter sp. (strain 638).